The sequence spans 514 residues: Respiratory nitrate reductase 2 beta chain (514 aa).

4Fe-4S ferredoxin-type domains are found at residues 7–35 (VGMV…GREG), 174–205 (TFMM…KREE), and 207–236 (GIVL…FNWK). Residues C16, C19, C22, C26, C183, C186, and C191 each contribute to the [4Fe-4S] cluster site. Residues C195, C216, and C222 each coordinate [3Fe-4S] cluster. C226, C243, C246, C258, and C262 together coordinate [4Fe-4S] cluster.

As to quaternary structure, dimer of heterotrimers each composed of an alpha, a beta and a gamma chain. Alpha and beta are catalytic chains; gamma chains are involved in binding the enzyme complex to the cytoplasmic membrane. [4Fe-4S] cluster is required as a cofactor. Requires [3Fe-4S] cluster as cofactor.

It localises to the cell membrane. It carries out the reaction nitrate + a quinol = a quinone + nitrite + H2O. This is a second nitrate reductase enzyme which can substitute for the NRA enzyme and allows E.coli to use nitrate as an electron acceptor during anaerobic growth. The beta chain is an electron transfer unit containing four cysteine clusters involved in the formation of iron-sulfur centers. Electrons are transferred from the gamma chain to the molybdenum cofactor of the alpha subunit. This is Respiratory nitrate reductase 2 beta chain (narY) from Escherichia coli (strain K12).